The sequence spans 109 residues: Nucleoid-associated protein HI_0442 (109 aa).

This sequence belongs to the YbaB/EbfC family. Homodimer.

The protein localises to the cytoplasm. It is found in the nucleoid. Its function is as follows. Binds to DNA and alters its conformation. May be involved in regulation of gene expression, nucleoid organization and DNA protection. In Haemophilus influenzae (strain ATCC 51907 / DSM 11121 / KW20 / Rd), this protein is Nucleoid-associated protein HI_0442.